A 346-amino-acid chain; its full sequence is Phosphoribosylformylglycinamidine cyclo-ligase (346 aa).

This sequence belongs to the AIR synthase family.

Its subcellular location is the cytoplasm. The catalysed reaction is 2-formamido-N(1)-(5-O-phospho-beta-D-ribosyl)acetamidine + ATP = 5-amino-1-(5-phospho-beta-D-ribosyl)imidazole + ADP + phosphate + H(+). The protein operates within purine metabolism; IMP biosynthesis via de novo pathway; 5-amino-1-(5-phospho-D-ribosyl)imidazole from N(2)-formyl-N(1)-(5-phospho-D-ribosyl)glycinamide: step 2/2. In Bacillus velezensis (strain DSM 23117 / BGSC 10A6 / LMG 26770 / FZB42) (Bacillus amyloliquefaciens subsp. plantarum), this protein is Phosphoribosylformylglycinamidine cyclo-ligase.